We begin with the raw amino-acid sequence, 468 residues long: 5-carboxymethyl-2-hydroxymuconate semialdehyde dehydrogenase (468 aa).

Glutamate 244 is an active-site residue. Cysteine 278 functions as the Nucleophile in the catalytic mechanism.

Belongs to the aldehyde dehydrogenase family. As to quaternary structure, homodimer.

The enzyme catalyses 2-hydroxy-5-carboxymethylmuconate semialdehyde + NAD(+) + H2O = (2E,4Z)-5-hydroxypenta-2,4-diene-1,2,5-tricarboxylate + NADH + 2 H(+). The protein operates within aromatic compound metabolism; 4-hydroxyphenylacetate degradation; pyruvate and succinate semialdehyde from 4-hydroxyphenylacetate: step 3/7. In terms of biological role, catalyzes the conversion of 5-carboxymethyl-2-hydroxy-muconic semialdehyde (CHMS) into 5-carboxymethyl-2-hydroxy-muconic acid (CHM or (2E,4Z)-5-hydroxypenta-2,4-diene-1,2,5-tricarboxylate). Is involved in a meta-cleavage pathway for the catabolism of 4-hydroxyphenylacetate (4-HPA) via homoprotocatechuate (HPC or 3,4-dihydroxyphenylacetate). The sequence is that of 5-carboxymethyl-2-hydroxymuconate semialdehyde dehydrogenase from Escherichia coli.